Consider the following 428-residue polypeptide: Glutamate-1-semialdehyde 2,1-aminomutase (428 aa).

Residue Lys267 is modified to N6-(pyridoxal phosphate)lysine.

It belongs to the class-III pyridoxal-phosphate-dependent aminotransferase family. HemL subfamily. Homodimer. Pyridoxal 5'-phosphate is required as a cofactor.

It is found in the cytoplasm. It carries out the reaction (S)-4-amino-5-oxopentanoate = 5-aminolevulinate. Its pathway is porphyrin-containing compound metabolism; protoporphyrin-IX biosynthesis; 5-aminolevulinate from L-glutamyl-tRNA(Glu): step 2/2. The sequence is that of Glutamate-1-semialdehyde 2,1-aminomutase from Flavobacterium psychrophilum (strain ATCC 49511 / DSM 21280 / CIP 103535 / JIP02/86).